The following is a 123-amino-acid chain: Dihydroneopterin triphosphate 2'-epimerase (123 aa).

This sequence belongs to the DHNA family. In terms of assembly, homooctamer. Dimer of tetramers.

It carries out the reaction 7,8-dihydroneopterin 3'-triphosphate = 7,8-dihydromonapterin 3'-triphosphate. Functionally, catalyzes the epimerization of carbon 2' of the side chain of 7,8-dihydroneopterin triphosphate (H2NTP) to form 7,8-dihydromonapterin triphosphate (H2MTP). Is required for tetrahydromonapterin biosynthesis. The protein is Dihydroneopterin triphosphate 2'-epimerase of Pseudomonas aeruginosa (strain ATCC 15692 / DSM 22644 / CIP 104116 / JCM 14847 / LMG 12228 / 1C / PRS 101 / PAO1).